Reading from the N-terminus, the 158-residue chain is uncharacterized protein (158 aa).

The signal sequence occupies residues 1–30; that stretch reads MNKKFLKCGTLFLISCSILGSTIPAVTVFS.

This is an uncharacterized protein from Streptococcus pneumoniae serotype 2 (strain D39 / NCTC 7466).